Consider the following 205-residue polypeptide: MSAIAPGLVLLAYLCGSISSAILVCRLAGLPDPRDSGSGNPGATNVLRIGGKGAAVAVLIFDVLKGMLPVWGAWALGLTPFWLGLVAIAACVGHIWPVFFHFRGGKGVATAFGAIAPIGLDLTGVMAGTWLLTILLSGYSSLGAIVSALIAPFYVWWFKPQYTFPVSMLSCLILLRHHDNIQRLWRRQESKIWTRMKKKKAPEQK.

A run of 5 helical transmembrane segments spans residues 4-24, 80-100, 107-127, 130-150, and 155-175; these read IAPG…AILV, PFWL…PVFF, GVAT…GVMA, WLLT…SALI, and VWWF…LILL.

Belongs to the PlsY family. Probably interacts with PlsX.

Its subcellular location is the cell inner membrane. It carries out the reaction an acyl phosphate + sn-glycerol 3-phosphate = a 1-acyl-sn-glycero-3-phosphate + phosphate. It participates in lipid metabolism; phospholipid metabolism. Its function is as follows. Catalyzes the transfer of an acyl group from acyl-phosphate (acyl-PO(4)) to glycerol-3-phosphate (G3P) to form lysophosphatidic acid (LPA). This enzyme utilizes acyl-phosphate as fatty acyl donor, but not acyl-CoA or acyl-ACP. This chain is Glycerol-3-phosphate acyltransferase, found in Klebsiella pneumoniae (strain 342).